We begin with the raw amino-acid sequence, 555 residues long: Hydroxylamine reductase (555 aa).

[4Fe-4S] cluster is bound by residues cysteine 5, cysteine 8, cysteine 17, and cysteine 23. Hybrid [4Fe-2O-2S] cluster-binding residues include histidine 248, glutamate 272, cysteine 316, cysteine 408, cysteine 436, cysteine 461, glutamate 496, and lysine 498. Cysteine 408 carries the cysteine persulfide modification.

It belongs to the HCP family. Requires [4Fe-4S] cluster as cofactor. Hybrid [4Fe-2O-2S] cluster is required as a cofactor.

The protein resides in the cytoplasm. It catalyses the reaction A + NH4(+) + H2O = hydroxylamine + AH2 + H(+). In terms of biological role, catalyzes the reduction of hydroxylamine to form NH(3) and H(2)O. This chain is Hydroxylamine reductase, found in Halothermothrix orenii (strain H 168 / OCM 544 / DSM 9562).